The primary structure comprises 404 residues: DIHTTAVAGVGVRKDVTRLTVSETENLREALRRIKADNGSDGFQSIASFHGSPPGCEHENHSVACCIHGMANFPQWHRLYVKQWEDALTAQGAKIGIPYWDWTTAFTELPALVTEEVDNPFHHGTIYNGEITTRAPRDKLFNDPEFGKESFFYRQVLLALEQTDYCDFEVQYEISHNAIHSWTGGQSPYGMSTLEYTAYDPLFLLHHSNVDRQFAIWQALQKFRGLPYNSANCAIQLLHQPMRPFSDADNVNPVTRTNSRARDVFNYDRLNYQYDDLNFHGLSISELNDVLERRKEKARIFAEFLLHGIGASADVTFDLCDSHDHCEFAGTFAILGGPLEHPWAFDRLFKYDVTDVFSKLHLRPDSEYHFNIHIVSVNGTELDSHLIRSPTVQFVPGVKDYYEK.

Asn38 carries N-linked (GlcNAc...) asparagine glycosylation. A Cu cation-binding site is contributed by His50. Cys56 and Cys65 are joined by a disulfide. N-linked (GlcNAc...) asparagine glycosylation is present at Asn60. Residue His61 coordinates Cu cation. The segment at residues 66–68 (CIH) is a cross-link (2'-(S-cysteinyl)-histidine (Cys-His)). Residues His77, His176, His180, and His207 each contribute to the Cu cation site. Intrachain disulfides connect Cys166–Cys233 and Cys320–Cys326. A glycan (N-linked (GlcNAc...) asparagine) is linked at Asn378.

It belongs to the tyrosinase family. Hemocyanin subfamily. As to quaternary structure, decamers of large identical subunits (450 kDa), each containing 8 globular oxygen-binding functional units. It depends on Cu(2+) as a cofactor.

Hemocyanins are copper-containing oxygen carriers occurring freely dissolved in the hemolymph of many mollusks and arthropods. The protein is Hemocyanin, beta-C chain unit G of Helix pomatia (Roman snail).